We begin with the raw amino-acid sequence, 675 residues long: Protein PALS1 (675 aa).

Disordered stretches follow at residues 1–32 and 52–79; these read MTTS…HPKH and RSAQ…KQEL. Positions 1–345 are required for the correct localization of PALS1 and PATJ at cell-cell contacts and the normal formation of tight junctions and adherens junctions; sequence MTTSYMNGHV…QQIKPPPAKE (345 aa). Phosphoserine occurs at positions 14 and 25. Positions 21 to 140 are interaction with PARD6B; the sequence is LGLASPEEHP…LKHIQHTLVD (120 aa). The span at 54–79 shows a compositional bias: basic and acidic residues; the sequence is AQLERIRQQQEDMRRRREEEGKKQEL. Residues Ser83 and Ser84 each carry the phosphoserine modification. 2 consecutive L27 domains span residues 120–177 and 179–235; these read KILE…NKAS and PFPL…MQLE. The tract at residues 181–243 is interaction with LIN7C; it reads PLIANVQDLV…LEPITDERVY (63 aa). Positions 256-336 constitute a PDZ domain; that stretch reads IVRIEKARDI…TLTFVLIPSQ (81 aa). Residues 345–417 form the SH3 domain; that stretch reads ETVIHVKAHF…PGKSFQQQRE (73 aa). Residues 479 to 660 form the Guanylate kinase-like domain; sequence KRPIILIGPQ…AYQELLRLIN (182 aa). 486 to 493 contacts ATP; that stretch reads GPQNCGQN.

This sequence belongs to the MAGUK family. Heterodimer with MPP1. Forms a heterotrimeric complex composed of PALS1, LIN7B and PATJ; the N-terminal L27 domain of PALS1 interacts with the L27 domain of PATJ and the C-terminal L27 domain of PALS1 interacts with the L27 domain of LIN7B. Component of a complex composed of PALS1, CRB1 and MPP4. Component of a complex whose core is composed of ARHGAP17, AMOT, PALS1, PATJ and PARD3/PAR3. Component of a complex composed of PALS1, CRB1 and EPB41L5. Within the complex, interacts (via HOOK domain) with EPB41L5 (via FERM domain), and interacts with CRB1 (via intracellular domain). Component of a complex composed of PALS1, MPP3 and CRB1; PALS1 acts as a bridging protein between MPP3 (via guanylate kinase-like domain) and CRB1. Component of a complex composed of CRB3, PALS1 and PATJ. As part of the Crumbs complex; interacts with WWP1, the interaction is enhanced by AMOTL2 and facilitates WWP1 localization to the plasma membrane. The Crumbs complex promotes monoubiquitination of AMOTL2 by WWP1, which activates the Hippo signaling pathway. Interacts (via PDZ domain) with PATJ (via N-terminus). Interacts with EZR. Interacts (via PDZ domain) with CRB1 (via C-terminal ERLI motif). While the PDZ domain is sufficient for interaction with CRB1, the adjacent SH3 and guanylate kinase-like domains are likely to contribute to a high affinity interaction. Interacts with WWTR1/TAZ (via WW domain). Interacts with MPP7. Interacts (via PDZ domain) with CRB3 (via C-terminus). Interacts with LIN7C. Interacts with MPDZ. Interacts with PARD6B. Interacts with SC6A1. Interacts with CDH5; the interaction promotes PALS1 localization to cell junctions and is required for CDH5-mediated vascular lumen formation and endothelial cell. Interacts with NPHP1 (via coiled coil and SH3 domains). Interacts with NPHP4. Interacts with CRB2.

It localises to the golgi apparatus. The protein localises to the cell membrane. The protein resides in the endomembrane system. Its subcellular location is the cell junction. It is found in the tight junction. It localises to the adherens junction. The protein localises to the cell projection. The protein resides in the axon. Its subcellular location is the perikaryon. It is found in the apical cell membrane. In terms of biological role, plays a role in tight junction biogenesis and in the establishment of cell polarity in epithelial cells. Also involved in adherens junction biogenesis by ensuring correct localization of the exocyst complex protein EXOC4/SEC8 which allows trafficking of adherens junction structural component CDH1 to the cell surface. Plays a role through its interaction with CDH5 in vascular lumen formation and endothelial membrane polarity. Required during embryonic and postnatal retinal development. Required for the maintenance of cerebellar progenitor cells in an undifferentiated proliferative state, preventing premature differentiation, and is required for cerebellar histogenesis, fissure formation, cerebellar layer organization and cortical development. Plays a role in neuronal progenitor cell survival, potentially via promotion of mTOR signaling. Plays a role in the radial and longitudinal extension of the myelin sheath in Schwann cells. May modulate SC6A1/GAT1-mediated GABA uptake by stabilizing the transporter. May play a role in the T-cell receptor-mediated activation of NF-kappa-B. Required for localization of EZR to the apical membrane of parietal cells and may play a role in the dynamic remodeling of the apical cytoskeleton. Required for the normal polarized localization of the vesicular marker STX4. Required for the correct trafficking of the myelin proteins PMP22 and MAG. Involved in promoting phosphorylation and cytoplasmic retention of transcriptional coactivators YAP1 and WWTR1/TAZ which leads to suppression of TGFB1-dependent transcription of target genes such as CCN2/CTGF, SERPINE1/PAI1, SNAI1/SNAIL1 and SMAD7. This is Protein PALS1 from Rattus norvegicus (Rat).